Consider the following 469-residue polypeptide: Glutamine synthetase (469 aa).

Residues 13–97 (KEVRYVDLRF…LRCDIVEPAT (85 aa)) form the GS beta-grasp domain. The region spanning 105–469 (PRSIAKRAEA…PVEFDMYYSL (365 aa)) is the GS catalytic domain. 2 residues coordinate Mg(2+): E130 and E132. E208 provides a ligand contact to ATP. Positions 213 and 221 each coordinate Mg(2+). Residues 265–266 (NG) and G266 contribute to the L-glutamate site. Residue H270 coordinates Mg(2+). ATP is bound by residues 272–274 (HQS) and S274. 3 residues coordinate L-glutamate: R322, E328, and R340. 3 residues coordinate ATP: R340, R345, and K353. E358 is a binding site for Mg(2+). R360 is a binding site for L-glutamate. Y398 carries the post-translational modification O-AMP-tyrosine.

The protein belongs to the glutamine synthetase family. In terms of assembly, oligomer of 12 subunits arranged in the form of two hexameric ring. The cofactor is Mg(2+).

Its subcellular location is the cytoplasm. It carries out the reaction L-glutamate + NH4(+) + ATP = L-glutamine + ADP + phosphate + H(+). Its activity is regulated as follows. The activity of this enzyme could be controlled by adenylation under conditions of abundant glutamine. Catalyzes the ATP-dependent biosynthesis of glutamine from glutamate and ammonia. This chain is Glutamine synthetase, found in Methylococcus capsulatus (strain ATCC 33009 / NCIMB 11132 / Bath).